We begin with the raw amino-acid sequence, 266 residues long: Thymidylate synthase (266 aa).

DUMP-binding positions include arginine 20 and 129-130 (RR). Cysteine 149 (nucleophile) is an active-site residue. DUMP-binding positions include 169–172 (RSCD), asparagine 180, and 210–212 (HVY). Aspartate 172 serves as a coordination point for (6R)-5,10-methylene-5,6,7,8-tetrahydrofolate. Residue alanine 265 participates in (6R)-5,10-methylene-5,6,7,8-tetrahydrofolate binding.

Belongs to the thymidylate synthase family. Bacterial-type ThyA subfamily. As to quaternary structure, homodimer.

It localises to the cytoplasm. It catalyses the reaction dUMP + (6R)-5,10-methylene-5,6,7,8-tetrahydrofolate = 7,8-dihydrofolate + dTMP. The protein operates within pyrimidine metabolism; dTTP biosynthesis. Functionally, catalyzes the reductive methylation of 2'-deoxyuridine-5'-monophosphate (dUMP) to 2'-deoxythymidine-5'-monophosphate (dTMP) while utilizing 5,10-methylenetetrahydrofolate (mTHF) as the methyl donor and reductant in the reaction, yielding dihydrofolate (DHF) as a by-product. This enzymatic reaction provides an intracellular de novo source of dTMP, an essential precursor for DNA biosynthesis. This chain is Thymidylate synthase, found in Bifidobacterium longum (strain NCC 2705).